Here is a 492-residue protein sequence, read N- to C-terminus: Probable glycogen synthase 2 (492 aa).

K15 serves as a coordination point for ADP-alpha-D-glucose.

The protein belongs to the glycosyltransferase 1 family. Bacterial/plant glycogen synthase subfamily.

It catalyses the reaction [(1-&gt;4)-alpha-D-glucosyl](n) + ADP-alpha-D-glucose = [(1-&gt;4)-alpha-D-glucosyl](n+1) + ADP + H(+). The protein operates within glycan biosynthesis; glycogen biosynthesis. Its function is as follows. Synthesizes alpha-1,4-glucan chains using ADP-glucose. The chain is Probable glycogen synthase 2 (glgA2) from Nostoc sp. (strain PCC 7120 / SAG 25.82 / UTEX 2576).